Consider the following 484-residue polypeptide: Putative transporter B0252.3 (484 aa).

The next 11 membrane-spanning stretches (helical) occupy residues 43-63 (ILTCILVCGLAWSPLAFTGLC), 95-115 (STTTFYMVGNMIGGMFIPPLA), 121-141 (LPVFVATVLLMAVGGMISAFS), 144-164 (IMMFCIMRMIHGIFYTAAGLA), 183-203 (VYFGVMWVVGACFLGLLAYIL), 208-228 (YLMFCISVPNIFVALLIYMTV), 286-306 (MFIVYVLVMTYIWIVDTFIYF), 321-341 (LNFVLMSLVEAPAYIFSPIFM), 348-368 (VLISGTHIIAGLSFLGIVLSS), 373-393 (IHFWLLGKFAISCSFMSIYMF), and 433-453 (LAPAITLSLIAVSGGLLTLIL).

This sequence belongs to the major facilitator superfamily. Sugar transporter (TC 2.A.1.1) family.

The protein localises to the membrane. The sequence is that of Putative transporter B0252.3 from Caenorhabditis elegans.